The primary structure comprises 423 residues: Large ribosomal subunit protein mL37 (423 aa).

A mitochondrion-targeting transit peptide spans 1–29 (MALASGPALRALAGSGRLGLGGYGTPKRG).

Belongs to the mitochondrion-specific ribosomal protein mL37 family. Component of the mitochondrial ribosome large subunit (39S) which comprises a 16S rRNA and about 50 distinct proteins.

The protein resides in the mitochondrion. The protein is Large ribosomal subunit protein mL37 (Mrpl37) of Mus musculus (Mouse).